A 129-amino-acid chain; its full sequence is Large ribosomal subunit protein bL17 (129 aa).

The protein belongs to the bacterial ribosomal protein bL17 family. In terms of assembly, part of the 50S ribosomal subunit. Contacts protein L32.

The protein is Large ribosomal subunit protein bL17 of Acidovorax ebreus (strain TPSY) (Diaphorobacter sp. (strain TPSY)).